The sequence spans 186 residues: Peptidyl-tRNA hydrolase (186 aa).

Tyr14 provides a ligand contact to tRNA. Catalysis depends on His19, which acts as the Proton acceptor. Residues Tyr64, Asn66, and Asn112 each coordinate tRNA.

This sequence belongs to the PTH family. Monomer.

The protein localises to the cytoplasm. It carries out the reaction an N-acyl-L-alpha-aminoacyl-tRNA + H2O = an N-acyl-L-amino acid + a tRNA + H(+). Its function is as follows. Hydrolyzes ribosome-free peptidyl-tRNAs (with 1 or more amino acids incorporated), which drop off the ribosome during protein synthesis, or as a result of ribosome stalling. Catalyzes the release of premature peptidyl moieties from peptidyl-tRNA molecules trapped in stalled 50S ribosomal subunits, and thus maintains levels of free tRNAs and 50S ribosomes. The protein is Peptidyl-tRNA hydrolase of Lachnospira eligens (strain ATCC 27750 / DSM 3376 / VPI C15-48 / C15-B4) (Eubacterium eligens).